We begin with the raw amino-acid sequence, 407 residues long: Lysophospholipid transporter LplT (407 aa).

Transmembrane regions (helical) follow at residues 18–38 (AVII…FATL), 53–73 (FLQM…GQIA), 91–111 (AGAL…LVGV), 139–159 (LMEA…GVLA), 163–183 (IYGA…ANML), 229–249 (WGAG…ALGI), 257–277 (LLNA…AKLV), 286–306 (LPAG…HNLM), 310–330 (SLLI…NALL), 343–365 (AIAV…YSLV), and 375–395 (IGIG…VWLI).

Belongs to the major facilitator superfamily. LplT (TC 2.A.1.42) family.

The protein resides in the cell inner membrane. In terms of biological role, catalyzes the facilitated diffusion of 2-acyl-glycero-3-phosphoethanolamine (2-acyl-GPE) into the cell. This chain is Lysophospholipid transporter LplT, found in Pectobacterium carotovorum subsp. carotovorum (strain PC1).